The chain runs to 861 residues: Glucans biosynthesis glucosyltransferase H (861 aa).

6 helical membrane passes run 142–162 (FILL…MKGI), 188–208 (VLPY…FCWV), 516–536 (VFLT…FLVL), 573–593 (LFST…MLIW), 600–620 (FGGV…SVLL), and 683–703 (FLWW…VSVI).

The protein belongs to the glycosyltransferase 2 family. OpgH subfamily.

It is found in the cell inner membrane. The protein operates within glycan metabolism; osmoregulated periplasmic glucan (OPG) biosynthesis. Functionally, involved in the biosynthesis of osmoregulated periplasmic glucans (OPGs). The chain is Glucans biosynthesis glucosyltransferase H from Pseudomonas aeruginosa (strain LESB58).